The primary structure comprises 330 residues: Putative protein DDB_G0285185 (330 aa).

The interval 212–240 is disordered; sequence NKLQNQVQSSPKLSSPITKNKEQIVSTTS. The span at 214–240 shows a compositional bias: polar residues; it reads LQNQVQSSPKLSSPITKNKEQIVSTTS.

The sequence is that of Putative protein DDB_G0285185 from Dictyostelium discoideum (Social amoeba).